The following is a 227-amino-acid chain: MSSPWYTWTCCGINLFGRGNHAYKRLGDPLEGCPERWRQEIDLGLPPGVCLGDVVQSNLGTTALHQTYLLAVQSNKITDYLKRFDVAKIPAGCQETVKTQVKKLQSIQNVVWNTMLALAVGEITVDDSALQSLLNKRAGECVSLMEMEKLATAMASDDSVIWASEISHSLSEPTSVLPLTPAVTRQPEATLPKPPTEDPSVSAMHSSIPPRPSSTLEETTESAIGST.

Residue cysteine 11 is the site of S-palmitoyl cysteine; by host attachment. The tract at residues valine 183–threonine 227 is disordered. Over residues serine 213–threonine 227 the composition is skewed to polar residues.

Belongs to the herpesviridae UL51 family. In terms of assembly, oligomerizes. Interacts with ORF42; this interaction mediates ORF42 incorporation to virions. Interacts with vBCL2. Post-translationally, phosphorylated. In terms of processing, palmitoylation is necessary for Golgi localization.

It is found in the virion tegument. The protein resides in the host cytoplasm. The protein localises to the host Golgi apparatus. In terms of biological role, plays several roles during the time course of infection, including egress of virus particles from the perinuclear space and secondary envelopment of cytoplasmic capsids that bud into specific trans-Golgi network (TGN)-derived membranes. This is Tegument protein ORF55 (ORF55) from Homo sapiens (Human).